An 89-amino-acid chain; its full sequence is Small ribosomal subunit protein uS15 (89 aa).

It belongs to the universal ribosomal protein uS15 family. Part of the 30S ribosomal subunit. Forms a bridge to the 50S subunit in the 70S ribosome, contacting the 23S rRNA.

Functionally, one of the primary rRNA binding proteins, it binds directly to 16S rRNA where it helps nucleate assembly of the platform of the 30S subunit by binding and bridging several RNA helices of the 16S rRNA. Forms an intersubunit bridge (bridge B4) with the 23S rRNA of the 50S subunit in the ribosome. The polypeptide is Small ribosomal subunit protein uS15 (Corynebacterium glutamicum (strain R)).